Here is a 921-residue protein sequence, read N- to C-terminus: Isoleucine--tRNA ligase (921 aa).

Positions Pro57–His67 match the 'HIGH' region motif. Residue Glu552 participates in L-isoleucyl-5'-AMP binding. The short motif at Lys593–Ser597 is the 'KMSKS' region element. Residue Lys596 participates in ATP binding. Zn(2+) contacts are provided by Cys888, Cys891, Cys908, and Cys911.

Belongs to the class-I aminoacyl-tRNA synthetase family. IleS type 1 subfamily. In terms of assembly, monomer. Zn(2+) serves as cofactor.

The protein localises to the cytoplasm. It carries out the reaction tRNA(Ile) + L-isoleucine + ATP = L-isoleucyl-tRNA(Ile) + AMP + diphosphate. Its function is as follows. Catalyzes the attachment of isoleucine to tRNA(Ile). As IleRS can inadvertently accommodate and process structurally similar amino acids such as valine, to avoid such errors it has two additional distinct tRNA(Ile)-dependent editing activities. One activity is designated as 'pretransfer' editing and involves the hydrolysis of activated Val-AMP. The other activity is designated 'posttransfer' editing and involves deacylation of mischarged Val-tRNA(Ile). The chain is Isoleucine--tRNA ligase from Bacillus cereus (strain AH187).